Here is a 280-residue protein sequence, read N- to C-terminus: Urease accessory protein UreD 1 (280 aa).

It belongs to the UreD family. In terms of assembly, ureD, UreF and UreG form a complex that acts as a GTP-hydrolysis-dependent molecular chaperone, activating the urease apoprotein by helping to assemble the nickel containing metallocenter of UreC. The UreE protein probably delivers the nickel.

It localises to the cytoplasm. Functionally, required for maturation of urease via the functional incorporation of the urease nickel metallocenter. This Brucella canis (strain ATCC 23365 / NCTC 10854 / RM-666) protein is Urease accessory protein UreD 1.